A 427-amino-acid polypeptide reads, in one-letter code: Retron Mx65 reverse transcriptase (427 aa).

In terms of domain architecture, Reverse transcriptase spans Arg136–Val366. Mg(2+) is bound by residues Asp219, Asp315, and Asp316.

Belongs to the bacterial reverse transcriptase family.

The catalysed reaction is DNA(n) + a 2'-deoxyribonucleoside 5'-triphosphate = DNA(n+1) + diphosphate. Reverse transcriptase (RT) responsible for synthesis of msDNA-Mx65 (a branched molecule with RNA linked by a 2',5'-phosphodiester bond to ssDNA). The retron transcript serves as primer (from a conserved internal G residue) and template for the reaction, and codes for the RT. The retron is involved in antiviral defense. The protein is Retron Mx65 reverse transcriptase of Myxococcus xanthus.